A 590-amino-acid chain; its full sequence is Melanophilin (590 aa).

The RabBD domain occupies 4–124 (RLDLSTLTDE…IGSLEWYYQH (121 aa)). The FYVE-type zinc finger occupies 64–107 (CARCLQPYRLLLNSRRQCLECSLFVCKSCSHAHPEEQGWLCDPC). Disordered stretches follow at residues 147–182 (GGGGSEPSLEEGNGDSEQTDEDGDLDTEARDQPLNS), 215–276 (SVPE…AELD), 311–335 (DTSDEDSIQGPRAASQHSKRRARTV), 361–472 (VLPP…SEIS), and 485–590 (GLTV…AQQP). The span at 154–172 (SLEEGNGDSEQTDEDGDLD) shows a compositional bias: acidic residues. Over residues 215 to 238 (SVPESAHSLQSLSGEPYSEDTTSL) the composition is skewed to polar residues. The stretch at 339-485 (QILELNKRMS…SRIAALRAAG (147 aa)) forms a coiled coil. The segment covering 391–401 (LTSNISGSSTS) has biased composition (low complexity). The span at 424–433 (GHMETQERNP) shows a compositional bias: basic and acidic residues.

Binds RAB27A that has been activated by GTP-binding via its N-terminus. Binds MYO5A via its C-terminal coiled coil domain. Highly expressed in embryos at day 7; not detectable at day 11. Highly expressed in adult stomach; detected at lower levels in kidney, lung, skin and small intestine. Detected in melanocytes.

It localises to the melanosome. Functionally, rab effector protein involved in melanosome transport. Serves as link between melanosome-bound RAB27A and the motor protein MYO5A. This is Melanophilin (Mlph) from Mus musculus (Mouse).